The primary structure comprises 109 residues: Putative pterin-4-alpha-carbinolamine dehydratase (109 aa).

Belongs to the pterin-4-alpha-carbinolamine dehydratase family.

It carries out the reaction (4aS,6R)-4a-hydroxy-L-erythro-5,6,7,8-tetrahydrobiopterin = (6R)-L-erythro-6,7-dihydrobiopterin + H2O. The sequence is that of Putative pterin-4-alpha-carbinolamine dehydratase from Vibrio cholerae serotype O1 (strain ATCC 39315 / El Tor Inaba N16961).